The sequence spans 242 residues: Serine hydrolase cnsH (242 aa).

Active-site charge relay system residues include Ser56, Asp138, and His216.

The protein belongs to the AB hydrolase 3 family.

Its pathway is alkaloid biosynthesis. Functionally, serine hydrolase; part of the gene cluster that mediates the biosynthesis of communesins, a prominent class of indole alkaloids with great potential as pharmaceuticals. Communesins are biosynthesized by the coupling of tryptamine and aurantioclavine, two building blocks derived from L-tryptophan. The L-tryptophan decarboxylase cnsB converts L-tryptophan to tryptamine, whereas the tryptophan dimethylallyltransferase cnsF converts L-tryptophan to 4-dimethylallyl tryptophan which is further transformed to aurantioclavine by the aurantioclavine synthase cnsA, probably aided by the catalase cnsD. The cytochrome P450 monooxygenase cnsC catalyzes the heterodimeric coupling between the two different indole moieties, tryptamine and aurantioclavine, to construct vicinal quaternary stereocenters and yield the heptacyclic communesin scaffold. The O-methyltransferase cnsE then methylates the communesin scaffold to produce communesin K, the simplest characterized communesin that contains the heptacyclic core. The dioxygenase cnsJ converts communesin K into communesin I. Acylation to introduce the hexadienyl group at position N16 of communesin I by the acyltransferase cnsK leads to the production of communesin B. The hexadienyl group is produced by the highly reducing polyketide synthase cnsI, before being hydrolytically removed from cnsI by the serine hydrolase cnsH, converted into hexadienyl-CoA by the CoA ligase cnsG, and then transferred to communesin I by cnsK. Surprisingly, cnsK may also be a promiscuous acyltransferase that can tolerate a range of acyl groups, including acetyl-, propionyl-, and butyryl-CoA, which lead to communesins A, G and H respectively. The roles of the alpha-ketoglutarate-dependent dioxygenases cnsM and cnsP have still to be determined. In Penicillium expansum (Blue mold rot fungus), this protein is Serine hydrolase cnsH.